The following is an 85-amino-acid chain: NAD(P)H-quinone oxidoreductase subunit L (85 aa).

2 helical membrane-spanning segments follow: residues 17–37 (IVAV…PGFV) and 54–74 (AFMY…SPFL).

This sequence belongs to the complex I NdhL subunit family. In terms of assembly, NDH-1 can be composed of about 15 different subunits; different subcomplexes with different compositions have been identified which probably have different functions.

It localises to the cellular thylakoid membrane. The enzyme catalyses a plastoquinone + NADH + (n+1) H(+)(in) = a plastoquinol + NAD(+) + n H(+)(out). It carries out the reaction a plastoquinone + NADPH + (n+1) H(+)(in) = a plastoquinol + NADP(+) + n H(+)(out). Functionally, NDH-1 shuttles electrons from an unknown electron donor, via FMN and iron-sulfur (Fe-S) centers, to quinones in the respiratory and/or the photosynthetic chain. The immediate electron acceptor for the enzyme in this species is believed to be plastoquinone. Couples the redox reaction to proton translocation, and thus conserves the redox energy in a proton gradient. Cyanobacterial NDH-1 also plays a role in inorganic carbon-concentration. The sequence is that of NAD(P)H-quinone oxidoreductase subunit L from Crocosphaera subtropica (strain ATCC 51142 / BH68) (Cyanothece sp. (strain ATCC 51142)).